Reading from the N-terminus, the 302-residue chain is Quinolinate synthase (302 aa).

Iminosuccinate is bound by residues H24 and S41. C86 contacts [4Fe-4S] cluster. Iminosuccinate contacts are provided by residues 112–114 and S129; that span reads YVN. C173 provides a ligand contact to [4Fe-4S] cluster. Iminosuccinate contacts are provided by residues 199–201 and T216; that span reads HPE. [4Fe-4S] cluster is bound at residue C259.

The protein belongs to the quinolinate synthase family. Type 2 subfamily. Requires [4Fe-4S] cluster as cofactor.

It localises to the cytoplasm. It carries out the reaction iminosuccinate + dihydroxyacetone phosphate = quinolinate + phosphate + 2 H2O + H(+). Its pathway is cofactor biosynthesis; NAD(+) biosynthesis; quinolinate from iminoaspartate: step 1/1. Catalyzes the condensation of iminoaspartate with dihydroxyacetone phosphate to form quinolinate. The protein is Quinolinate synthase of Thermococcus onnurineus (strain NA1).